A 425-amino-acid chain; its full sequence is Histidine--tRNA ligase 1 (425 aa).

The protein belongs to the class-II aminoacyl-tRNA synthetase family. In terms of assembly, homodimer.

The protein resides in the cytoplasm. It carries out the reaction tRNA(His) + L-histidine + ATP = L-histidyl-tRNA(His) + AMP + diphosphate + H(+). The sequence is that of Histidine--tRNA ligase 1 from Bacillus cereus (strain ZK / E33L).